Reading from the N-terminus, the 77-residue chain is Spermatid-specific protein T2 (77 aa).

The tract at residues 1–21 is hydrophobic; the sequence is MKVAANTSKMLVEKLDLLKGG. The disordered stretch occupies residues 1-77; the sequence is MKVAANTSKM…YSRRRYRRRR (77 aa). Positions 20–77 are enriched in basic residues; sequence GGRRRRRRSRRRRRSRRRRSRSPYRRRYRRRRRRRRSRRRRRYRRRRSYSRRRYRRRR.

In terms of processing, phosphorylation occurs at different degrees. The triphosphorylated form may be predominant in T2. SP2 appears to be phosphorylated in elongated spermatids, but dephosphorylated in mature sperm cells. As to expression, testis.

It is found in the nucleus. It localises to the chromosome. Cuttlefish spermiogenesis is characterized by a double nuclear protein transition: histones -&gt; spermatid-specific proteins (T1/T2) -&gt; protamines (SP1/SP2). The protamines compact sperm DNA into a highly condensed, stable and inactive complex. In Sepia officinalis (Common cuttlefish), this protein is Spermatid-specific protein T2.